Reading from the N-terminus, the 402-residue chain is Nuclear hormone receptor family member nhr-96 (402 aa).

Residues 4–79 constitute a DNA-binding region (nuclear receptor); sequence FGLCAVCGQV…VGMDVKKIQQ (76 aa). 2 NR C4-type zinc fingers span residues 7–27 and 44–67; these read CAVC…CRSC and CVKA…LKRC. In terms of domain architecture, NR LBD spans 154 to 402; sequence NYYNSLELLT…FSDPEMFELT (249 aa).

The protein belongs to the nuclear hormone receptor family.

It is found in the nucleus. Orphan nuclear receptor. The chain is Nuclear hormone receptor family member nhr-96 (nhr-96) from Caenorhabditis elegans.